Reading from the N-terminus, the 91-residue chain is Large ribosomal subunit protein eL34 (91 aa).

Residues 48 to 71 (RGRPVEMRKLPKTKKRPERPYPHL) are disordered.

Belongs to the eukaryotic ribosomal protein eL34 family.

In Pyrococcus abyssi (strain GE5 / Orsay), this protein is Large ribosomal subunit protein eL34 (rpl34e).